The following is a 1211-amino-acid chain: MISIMDRSEIVARENPVITQRVTNLLQTNAPLLFMPIDIHEVRYGAYTLFMYGSLENGYKAEVRIENIPVFFDVQIEFNDTNQLFLKSLLTAENIAYERLETLTQRPVMGYREKEKEFAPYIRIFFKSLYEQRKAITYLNNMGYNTAADDTTCYYRMVSRELKLPLTSWIQLQHYSYEPRGLVHRFSVTPEDLVSYQDDGPTDHSIVMAYDIETYSPVKGTVPDPNQANDVVFMICMRIFWIHSTEPLASTCITMAPCKKSSEWTTILCSSEKNLLLSFAEQFSRWAPDICTGFNDSRYDWPFIVEKSMQHGILEEIFNKMSLFWHQKLDTILKCYYVKEKRVKISAEKSIISSFLHTPGCLPIDVRNMCMQLYPKAEKTSLKAFLENCGLDSKVDLPYHLMWKYYETRDSEKMADVAYYCIIDAQRCQDLLVRHNVIPDRREVGILSYTSLYDCIYYAGGHKVCNMLIAYAIHDEYGRIACSTIARGKREHGKYPGAFVIDPVKGLEQDKPTTGLDFASLYPSLIMAYNFSPEKFVASRDEAKSLMAKGESLHYVSFHFNNRLVEGWFVRHNNVPDKMGLYPKVLIDLLNKRTALKQELKKLGEKKECIHESHPGFKELQFRHAMVDAKQKALKIFMNTFYGEAGNNLSPFFLLPLAGGVTSSGQYNLKLVYNFVINKGYGIKYGDTDSLYITCPDSLYTEVTDAYLNSQKTIKHYEQLCHEKVLLSMKAMSTLCAEVNEYLRQDNGTSYLRMAYEEVLFPVCFTGKKKYYGIAHVNTPNFNTKELFIRGIDIIKQGQTKLTKTIGTRIMEESMKLRRPEDHRPPLIEIVKTVLKDAVVNMKQWNFEDFIQTDAWRPDKDNKAVQIFMSRMHARREQLKKHGAAASQFAEPEPGERFSYVIVEKQVQFDIQGHRTDSSRKGDKMEYVSEAKAKNLPIDILFYINNYVLGLCARFINENEEFQPPDNVSNKDEYAQRRAKSYLQKFVQSIHPKDKSVIKQGIVHRQCYKYVHQEIKKKIGIFADLYKEFFNNTTNPIESFIQSARFMIQYSDGEQKVNHSMKKMVEQRATLASKPAGKPAGNPAGNPAGNALMRAIFTQLITEEKKIVQALYNKGDAIHDLLTYIINNINYKIATFQTKQMLTFEFSSTHVELLLKLNKTWLILAGIHVAKKHLQALLDSYNNEPPSRTFIQQAIEEECGSIKPSCYDFIS.

Repeat copies occupy residues 1074-1077 (KPAG), 1078-1081 (KPAG), 1082-1085 (NPAG), and 1086-1089 (NPAG). Residues 1074-1089 (KPAGKPAGNPAGNPAG) form a 4 X 4 AA tandem repeats of [NK]-[P]-A-G region.

This sequence belongs to the DNA polymerase type-B family.

The enzyme catalyses DNA(n) + a 2'-deoxyribonucleoside 5'-triphosphate = DNA(n+1) + diphosphate. Its function is as follows. DNA-directed DNA polymerase involved in viral DNA replication. The sequence is that of DNA polymerase beta (DPOL) from African swine fever virus (strain Badajoz 1971 Vero-adapted) (Ba71V).